We begin with the raw amino-acid sequence, 191 residues long: Amelogenin, X isoform (191 aa).

The N-terminal stretch at 1–16 (MGTWILFACLLGAAFA) is a signal peptide. Ser32 is subject to Phosphoserine. Low complexity predominate over residues 95-117 (IPQQPMMPVPGQHSMTPIQHHQP). The tract at residues 95–191 (IPQQPMMPVP…TDKTKREEVD (97 aa)) is disordered. Residues 118 to 171 (NLPPPAQQPYQPQPVQPQPHQPMQPQPPVHPMQPLPPQPPLPPMFPMQPLPPML) show a composition bias toward pro residues.

The protein belongs to the amelogenin family. As to quaternary structure, interacts with KRT5. Post-translationally, phosphorylated by FAM20C in vitro.

The protein resides in the secreted. Its subcellular location is the extracellular space. It localises to the extracellular matrix. Its function is as follows. Plays a role in biomineralization. Seems to regulate the formation of crystallites during the secretory stage of tooth enamel development. Thought to play a major role in the structural organization and mineralization of developing enamel. The polypeptide is Amelogenin, X isoform (AMELX) (Homo sapiens (Human)).